We begin with the raw amino-acid sequence, 224 residues long: Pleckstrin homology domain-containing family B member 2 (224 aa).

Residues 2–109 (AFVKSGWLLR…WKIALQDART (108 aa)) form the PH domain. Lysine 20 is a binding site for a 1,2-diacyl-sn-glycero-3-phospho-L-serine.

Its subcellular location is the recycling endosome membrane. In terms of biological role, involved in retrograde transport of recycling endosomes. This chain is Pleckstrin homology domain-containing family B member 2 (PLEKHB2), found in Gallus gallus (Chicken).